A 206-amino-acid chain; its full sequence is Anti-sigma-W factor RsiW (206 aa).

The Cytoplasmic segment spans residues 1–87 (MSCPEHIVQL…ASINRWLKAH (87 aa)). Histidine 30, cysteine 34, and cysteine 37 together coordinate Zn(2+). Residues 88-108 (PFLVAAALFAILMGGSFFSSW) traverse the membrane as a helical segment. Residues 109-206 (KNDHDFSVSS…SVFGVKESKE (98 aa)) are Extracellular-facing.

Belongs to the zinc-associated anti-sigma factor (ZAS) superfamily. Anti-sigma-W factor family. Zn(2+) serves as cofactor. Is processed by three successive proteolytic events. First, the extracellular region of RsiW is cleaved by PrsW (Site-1 cleavage) in response to cell envelope stresses. Next, it undergoes cleavage at an intramembrane site (Site-2 cleavage) mediated by RasP. This cleavage uncovers a cryptic proteolytic tag with conserved alanine residues in the transmembrane segment, that is recognized mainly by the ClpXP protease, which completely degrades the protein in the cytoplasm and leads to the induction of the sigma-W-controlled genes.

It is found in the membrane. Its function is as follows. Is the anti-sigma factor for SigW. The presence of RsiW leads to the inactivation of SigW, and its proteolytic destruction to sigma-W activation. This Bacillus licheniformis (strain ATCC 14580 / DSM 13 / JCM 2505 / CCUG 7422 / NBRC 12200 / NCIMB 9375 / NCTC 10341 / NRRL NRS-1264 / Gibson 46) protein is Anti-sigma-W factor RsiW (rsiW).